Consider the following 293-residue polypeptide: Pyridoxal 5'-phosphate synthase subunit PdxS (293 aa).

A D-ribose 5-phosphate-binding site is contributed by Asp-23. Catalysis depends on Lys-80, which acts as the Schiff-base intermediate with D-ribose 5-phosphate. Gly-152 is a binding site for D-ribose 5-phosphate. Residue Arg-164 participates in D-glyceraldehyde 3-phosphate binding. Residues Gly-213 and 234–235 (GS) contribute to the D-ribose 5-phosphate site.

Belongs to the PdxS/SNZ family. In the presence of PdxT, forms a dodecamer of heterodimers.

It catalyses the reaction aldehydo-D-ribose 5-phosphate + D-glyceraldehyde 3-phosphate + L-glutamine = pyridoxal 5'-phosphate + L-glutamate + phosphate + 3 H2O + H(+). Its pathway is cofactor biosynthesis; pyridoxal 5'-phosphate biosynthesis. Functionally, catalyzes the formation of pyridoxal 5'-phosphate from ribose 5-phosphate (RBP), glyceraldehyde 3-phosphate (G3P) and ammonia. The ammonia is provided by the PdxT subunit. Can also use ribulose 5-phosphate and dihydroxyacetone phosphate as substrates, resulting from enzyme-catalyzed isomerization of RBP and G3P, respectively. The sequence is that of Pyridoxal 5'-phosphate synthase subunit PdxS from Roseiflexus sp. (strain RS-1).